The chain runs to 219 residues: Small ribosomal subunit protein uS3 (219 aa).

A KH type-2 domain is found at 39–108 (IKEFIKKNYF…KVTVKVQEIK (70 aa)).

It belongs to the universal ribosomal protein uS3 family. As to quaternary structure, part of the 30S ribosomal subunit. Forms a tight complex with proteins S10 and S14.

Binds the lower part of the 30S subunit head. Binds mRNA in the 70S ribosome, positioning it for translation. The sequence is that of Small ribosomal subunit protein uS3 from Fusobacterium nucleatum subsp. nucleatum (strain ATCC 25586 / DSM 15643 / BCRC 10681 / CIP 101130 / JCM 8532 / KCTC 2640 / LMG 13131 / VPI 4355).